The sequence spans 836 residues: Neuroligin-2 (836 aa).

An N-terminal signal peptide occupies residues 1–14; the sequence is MWLLALCLVGLAGA. Topologically, residues 15 to 678 are extracellular; it reads QRGGGGPGGG…DSRDYSTELS (664 aa). N-linked (GlcNAc...) asparagine glycans are attached at residues Asn98 and Asn136. 3 disulfides stabilise this stretch: Cys106-Cys141, Cys317-Cys328, and Cys487-Cys521. Asn522 carries N-linked (GlcNAc...) asparagine glycosylation. A disordered region spans residues 623-661; that stretch reads PPYATRWPPRTPGPGTSGTRRPPPPATLPPESDIDLGPR. A helical membrane pass occupies residues 679 to 699; it reads VTVAVGASLLFLNILAFAALY. Residues 679–699 form a required for interaction with LHFPL4 region; it reads VTVAVGASLLFLNILAFAALY. The Cytoplasmic segment spans residues 700 to 836; sequence YKRDRRQELR…LPHPHSTTRV (137 aa). Disordered regions lie at residues 711–735 and 791–836; these read RRLSPPGGSGSGVPGGGPLLPTAGR and LLPS…TTRV. 2 positions are modified to phosphoserine: Ser714 and Ser719. Positions 717 to 728 are enriched in gly residues; sequence GGSGSGVPGGGP. Over residues 796–819 the composition is skewed to pro residues; the sequence is LGPPPPPPPPSLHPFGPFPPPPPT. Residues 824–836 show a composition bias toward polar residues; it reads NNTLPHPHSTTRV.

Belongs to the type-B carboxylesterase/lipase family. Interacts with neurexins NRXN1, NRXN2 and NRXN3. Interaction with neurexins is mediated by heparan sulfate glycan modification on neurexin. Interacts (via its C-terminus) with DLG4/PSD-95 (via PDZ domain 3). Interacts with PATJ. Interacts with MDGA2. Interacts with GPHN. Interacts with MDGA1. Found in a complex with MAGI2 and IGSF9B, where it interacts with MAGI2 (via WW 1, WW 2 and PDZ 2 domains). Identified in a complex of 720 kDa composed of LHFPL4, NLGN2, GABRA1, GABRB2, GABRG2 and GABRB3. Interacts with LHFPL4; leading to mutual regulation of the protein level and synaptic clustering. Interacts with GABRA1. In terms of tissue distribution, brain and arteries. Detected in the retina outer plexiform layer (at protein level). Widely expressed. Detected in heart, brain, spleen, lung, liver, skeletal muscle, kidney and testis.

The protein resides in the cell membrane. The protein localises to the postsynaptic cell membrane. It localises to the presynaptic cell membrane. In terms of biological role, transmembrane scaffolding protein involved in cell-cell interactions via its interactions with neurexin family members. Mediates cell-cell interactions both in neurons and in other types of cells, such as Langerhans beta cells. Mediates cell-cell interactions between Langerhans beta cells and modulates insulin secretion. Plays a role in synapse function and synaptic signal transmission, especially via gamma-aminobutyric acid receptors (GABA(A) receptors). Functions by recruiting and clustering synaptic proteins. Promotes clustering of postsynaptic GABRG2 and GPHN. Promotes clustering of postsynaptic LHFPL4. Modulates signaling by inhibitory synapses, and thereby plays a role in controlling the ratio of signaling by excitatory and inhibitory synapses and information processing. Required for normal signal amplitude from inhibitory synapses, but is not essential for normal signal frequency. May promote the initial formation of synapses, but is not essential for this. In vitro, triggers the de novo formation of presynaptic structures. This chain is Neuroligin-2 (Nlgn2), found in Mus musculus (Mouse).